Consider the following 362-residue polypeptide: Cap-specific mRNA (nucleoside-2'-O-)-methyltransferase 1 (362 aa).

Positions 87-294 (SFGNRAGHKL…ERYLVCLGFL (208 aa)) constitute a RrmJ-type SAM-dependent 2'-O-MTase domain. S-adenosyl-L-methionine contacts are provided by Gly130 and Asp207. Lys248 (proton acceptor) is an active-site residue.

It is found in the nucleus. It carries out the reaction a 5'-end (N(7)-methyl 5'-triphosphoguanosine)-ribonucleoside in mRNA + S-adenosyl-L-methionine = a 5'-end (N(7)-methyl 5'-triphosphoguanosine)-(2'-O-methyl-ribonucleoside) in mRNA + S-adenosyl-L-homocysteine + H(+). In terms of biological role, S-adenosyl-L-methionine-dependent methyltransferase that mediates RNA cap1 2'-O-ribose methylation to the 5'-cap structure of spliced leader and U1 small nuclear RNAs. Methylates the ribose of the first nucleotide of a m(7)GpppG-capped RNA to produce m(7)GpppNmp (cap1). Cap1 modification is linked to higher levels of translation. Recognizes a guanosine cap on RNA independent of its N(7) methylation status. In Trypanosoma cruzi (strain CL Brener), this protein is Cap-specific mRNA (nucleoside-2'-O-)-methyltransferase 1.